Reading from the N-terminus, the 322-residue chain is AA9 family lytic polysaccharide monooxygenase A (322 aa).

The N-terminal stretch at 1–15 (MKVLSLLAAASAASA) is a signal peptide. 2 residues coordinate Cu(2+): His-16 and His-96. 2 cysteine pairs are disulfide-bonded: Cys-54–Cys-182 and Cys-152–Cys-237. 2 residues coordinate O2: His-168 and Gln-177. Residues Thr-228 and Thr-236 are each glycosylated (O-linked (Man...) threonine). The CBM1 domain maps to 286 to 322 (CTAAQWAQCGGMGFSGCTTCASPYTCKKMNDYYSQCS).

It belongs to the polysaccharide monooxygenase AA9 family. Cu(2+) serves as cofactor.

It localises to the secreted. The catalysed reaction is [(1-&gt;4)-beta-D-glucosyl]n+m + reduced acceptor + O2 = 4-dehydro-beta-D-glucosyl-[(1-&gt;4)-beta-D-glucosyl]n-1 + [(1-&gt;4)-beta-D-glucosyl]m + acceptor + H2O.. Lytic polysaccharide monooxygenase (LPMO) that depolymerizes crystalline and amorphous polysaccharides via the oxidation of scissile alpha- or beta-(1-4)-glycosidic bonds, yielding C4 oxidation products. Catalysis by LPMOs requires the reduction of the active-site copper from Cu(II) to Cu(I) by a reducing agent and H(2)O(2) or O(2) as a cosubstrate. Active on tamarind xyloglucan and konjac glucomannan. The polypeptide is AA9 family lytic polysaccharide monooxygenase A (gh61-1) (Neurospora crassa (strain ATCC 24698 / 74-OR23-1A / CBS 708.71 / DSM 1257 / FGSC 987)).